The primary structure comprises 91 residues: DNA-binding protein HU (91 aa).

It belongs to the bacterial histone-like protein family. In terms of assembly, homodimer.

In terms of biological role, histone-like DNA-binding protein which is capable of wrapping DNA to stabilize it, and thus to prevent its denaturation under extreme environmental conditions. The polypeptide is DNA-binding protein HU (hup) (Streptococcus thermophilus).